Consider the following 122-residue polypeptide: Large ribosomal subunit protein uL14 (122 aa).

It belongs to the universal ribosomal protein uL14 family. As to quaternary structure, part of the 50S ribosomal subunit. Forms a cluster with proteins L3 and L19. In the 70S ribosome, L14 and L19 interact and together make contacts with the 16S rRNA in bridges B5 and B8.

Its function is as follows. Binds to 23S rRNA. Forms part of two intersubunit bridges in the 70S ribosome. In Methylobacillus flagellatus (strain ATCC 51484 / DSM 6875 / VKM B-1610 / KT), this protein is Large ribosomal subunit protein uL14.